The following is a 206-amino-acid chain: Small ribosomal subunit protein uS4 (206 aa).

Positions 18 to 46 are disordered; sequence NIWGRPKSPVNRREYGPGQHGQRRKGKLS. The 63-residue stretch at 94-156 folds into the S4 RNA-binding domain; the sequence is RRLDAVVYRA…SKQNVAVLEA (63 aa).

This sequence belongs to the universal ribosomal protein uS4 family. Part of the 30S ribosomal subunit. Contacts protein S5. The interaction surface between S4 and S5 is involved in control of translational fidelity.

One of the primary rRNA binding proteins, it binds directly to 16S rRNA where it nucleates assembly of the body of the 30S subunit. Functionally, with S5 and S12 plays an important role in translational accuracy. This chain is Small ribosomal subunit protein uS4, found in Ruegeria sp. (strain TM1040) (Silicibacter sp.).